The chain runs to 547 residues: Sterol carrier protein 2 (547 aa).

Serine 3 carries the post-translational modification Phosphoserine. N6-acetyllysine; alternate is present on lysine 132. An N6-succinyllysine; alternate modification is found at lysine 132. The residue at position 168 (lysine 168) is an N6-succinyllysine. N6-acetyllysine is present on residues lysine 173 and lysine 177. Lysine 183 is modified (N6-acetyllysine; alternate). Position 183 is an N6-succinyllysine; alternate (lysine 183). The residue at position 282 (lysine 282) is an N6-succinyllysine. N6-acetyllysine; alternate occurs at positions 341, 432, 438, 443, and 453. N6-succinyllysine; alternate occurs at positions 341, 432, 438, 443, and 453. In terms of domain architecture, SCP2 spans 433-543 (ANLVFKEIEK…KLQNLQLQPG (111 aa)). An N6-succinyllysine modification is found at lysine 464. Position 470 is an N6-acetyllysine; alternate (lysine 470). Position 470 is an N6-succinyllysine; alternate (lysine 470). An N6-succinyllysine modification is found at lysine 479. N6-acetyllysine is present on lysine 491. N6-succinyllysine occurs at positions 492 and 511. A Phosphoserine modification is found at serine 516. 2 positions are modified to N6-succinyllysine: lysine 522 and lysine 534. The Microbody targeting signal signature appears at 545 to 547 (AKL).

The protein in the N-terminal section; belongs to the thiolase-like superfamily. Thiolase family. As to quaternary structure, interacts with PEX5; the interaction is essential for peroxisomal import. Post-translationally, preSCP2, a protein with a molecular mass of about 15 kDa, is processed into its mature form (SCP2) by proteolytic cleavage of a 20 residue leader sequence after translocation into peroxisomes. As to expression, liver, fibroblasts, and placenta.

Its subcellular location is the peroxisome. It localises to the cytoplasm. It is found in the mitochondrion. The protein localises to the endoplasmic reticulum. The catalysed reaction is choloyl-CoA + propanoyl-CoA = 3alpha,7alpha,12alpha-trihydroxy-24-oxo-5beta-cholestan-26-oyl-CoA + CoA. It carries out the reaction 4,8,12-trimethyltridecanoyl-CoA + propanoyl-CoA = 3-oxopristanoyl-CoA + CoA. It catalyses the reaction an acyl-CoA + acetyl-CoA = a 3-oxoacyl-CoA + CoA. The enzyme catalyses hexanoyl-CoA + acetyl-CoA = 3-oxooctanoyl-CoA + CoA. The catalysed reaction is tetradecanoyl-CoA + acetyl-CoA = 3-oxohexadecanoyl-CoA + CoA. It carries out the reaction 3-oxohexadecanedioyl-CoA + CoA = tetradecanedioyl-CoA + acetyl-CoA. It catalyses the reaction propanoyl-CoA + tetradecanoyl-CoA = 3-oxo-2-methylhexadecanoyl-CoA + CoA. The enzyme catalyses butanoyl-CoA + acetyl-CoA = 3-oxohexanoyl-CoA + CoA. The catalysed reaction is octanoyl-CoA + acetyl-CoA = 3-oxodecanoyl-CoA + CoA. It carries out the reaction decanoyl-CoA + acetyl-CoA = 3-oxododecanoyl-CoA + CoA. It catalyses the reaction dodecanoyl-CoA + acetyl-CoA = 3-oxotetradecanoyl-CoA + CoA. The enzyme catalyses hexadecanoyl-CoA + acetyl-CoA = 3-oxooctadecanoyl-CoA + CoA. The catalysed reaction is 3-oxo-(9Z-octadecenoyl)-CoA + CoA = (7Z)-hexadecenoyl-CoA + acetyl-CoA. It carries out the reaction 7-dehydrocholesterol(in) = 7-dehydrocholesterol(out). In terms of biological role, plays a crucial role in the peroxisomal oxidation of branched-chain fatty acids. Catalyzes the last step of the peroxisomal beta-oxidation of branched chain fatty acids and the side chain of the bile acid intermediates di- and trihydroxycoprostanic acids (DHCA and THCA). Also active with medium and long straight chain 3-oxoacyl-CoAs. Stimulates the microsomal conversion of 7-dehydrocholesterol to cholesterol and transfers phosphatidylcholine and 7-dehydrocholesterol between membrances, in vitro. Isoforms SCP2 and SCPx cooperate in peroxisomal oxidation of certain naturally occurring tetramethyl-branched fatty acyl-CoAs. Its function is as follows. Mediates the transfer of all common phospholipids, cholesterol and gangliosides from the endoplasmic reticulum to the plasma membrane. May play a role in regulating steroidogenesis. Stimulates the microsomal conversion of 7-dehydrocholesterol to cholesterol. Also binds fatty acids and fatty acyl Coenzyme A (CoA) such as phytanoyl-CoA. Involved in the regulation phospholipid synthesis in endoplasmic reticulum enhancing the incorporation of exogenous fatty acid into glycerides. Seems to stimulate the rate-limiting step in phosphatidic acid formation mediated by GPAT3. Isoforms SCP2 and SCPx cooperate in peroxisomal oxidation of certain naturally occurring tetramethyl-branched fatty acyl-CoAs. The protein is Sterol carrier protein 2 of Homo sapiens (Human).